The following is a 286-amino-acid chain: MLKDLFGKRKKYASIPSEKAKMDVPEGLMQKCSNCKKIYYRKEMVKALQVCPNCDYHHPMTAWDRIDSLFDNGTFEEWDKEITSANPLDFPEYESKIAKDREKTSLSEGVVTGKGKVNNVQIAFAVMDSHFRMGSMGSAIGEKITRAIEAAREESIPFVIFTASGGARMQEGVLSLMQMAKTSFAVKRFRDSGGLMISVMTHPTTGGVSASFASIGDYNFAEPGALIGFAGRRIIEQTIREKLPSDFQTAEFQLHHGQVDKVIHRQDMNDTLGKLLKMHMDGRQLK.

A CoA carboxyltransferase N-terminal domain is found at 28–286 (LMQKCSNCKK…KMHMDGRQLK (259 aa)). Residues Cys32, Cys35, Cys51, and Cys54 each coordinate Zn(2+). The segment at 32-54 (CSNCKKIYYRKEMVKALQVCPNC) adopts a C4-type zinc-finger fold.

The protein belongs to the AccD/PCCB family. Acetyl-CoA carboxylase is a heterohexamer composed of biotin carboxyl carrier protein (AccB), biotin carboxylase (AccC) and two subunits each of ACCase subunit alpha (AccA) and ACCase subunit beta (AccD). Requires Zn(2+) as cofactor.

Its subcellular location is the cytoplasm. The enzyme catalyses N(6)-carboxybiotinyl-L-lysyl-[protein] + acetyl-CoA = N(6)-biotinyl-L-lysyl-[protein] + malonyl-CoA. It participates in lipid metabolism; malonyl-CoA biosynthesis; malonyl-CoA from acetyl-CoA: step 1/1. Its function is as follows. Component of the acetyl coenzyme A carboxylase (ACC) complex. Biotin carboxylase (BC) catalyzes the carboxylation of biotin on its carrier protein (BCCP) and then the CO(2) group is transferred by the transcarboxylase to acetyl-CoA to form malonyl-CoA. This Oceanobacillus iheyensis (strain DSM 14371 / CIP 107618 / JCM 11309 / KCTC 3954 / HTE831) protein is Acetyl-coenzyme A carboxylase carboxyl transferase subunit beta.